The following is a 349-amino-acid chain: Phosphate carrier protein, mitochondrial (349 aa).

Solcar repeat units lie at residues 47-131 (KYFA…FKVQ), 144-229 (YRTF…TVEL), and 246-324 (EQLV…VKVW). 6 helical membrane passes run 48-68 (YFAL…TAVV), 108-128 (APTF…YEVF), 147-167 (FVYL…LSPL), 207-227 (PLWG…EKTV), 248-268 (LVVT…VSHP), and 304-324 (IIMI…VKVW).

The protein belongs to the mitochondrial carrier (TC 2.A.29) family.

The protein localises to the mitochondrion inner membrane. In terms of biological role, transport of phosphate groups from the cytosol to the mitochondrial matrix. This Choristoneura fumiferana (Spruce budworm moth) protein is Phosphate carrier protein, mitochondrial.